The chain runs to 188 residues: dCTP deaminase (188 aa).

109–114 (KSTYAR) lines the dCTP pocket. The Proton donor/acceptor role is filled by E135. DCTP contacts are provided by Q154, Y168, and Q178.

This sequence belongs to the dCTP deaminase family. In terms of assembly, homotrimer.

The catalysed reaction is dCTP + H2O + H(+) = dUTP + NH4(+). Its pathway is pyrimidine metabolism; dUMP biosynthesis; dUMP from dCTP (dUTP route): step 1/2. In terms of biological role, catalyzes the deamination of dCTP to dUTP. This is dCTP deaminase from Helicobacter acinonychis (strain Sheeba).